A 179-amino-acid chain; its full sequence is Large ribosomal subunit protein uL5 (179 aa).

The protein belongs to the universal ribosomal protein uL5 family. In terms of assembly, part of the 50S ribosomal subunit; part of the 5S rRNA/L5/L18/L25 subcomplex. Contacts the 5S rRNA and the P site tRNA. Forms a bridge to the 30S subunit in the 70S ribosome.

Its function is as follows. This is one of the proteins that bind and probably mediate the attachment of the 5S RNA into the large ribosomal subunit, where it forms part of the central protuberance. In the 70S ribosome it contacts protein S13 of the 30S subunit (bridge B1b), connecting the 2 subunits; this bridge is implicated in subunit movement. Contacts the P site tRNA; the 5S rRNA and some of its associated proteins might help stabilize positioning of ribosome-bound tRNAs. The chain is Large ribosomal subunit protein uL5 from Prochlorococcus marinus (strain MIT 9211).